The chain runs to 519 residues: Ion-translocating oxidoreductase complex subunit C (519 aa).

4Fe-4S ferredoxin-type domains are found at residues Glu-372–Asn-401 and Gly-411–Phe-440. Cys-381, Cys-384, Cys-387, Cys-391, Cys-420, Cys-423, Cys-426, and Cys-430 together coordinate [4Fe-4S] cluster. The segment at Lys-494–Pro-519 is disordered.

It belongs to the 4Fe4S bacterial-type ferredoxin family. RnfC subfamily. In terms of assembly, the complex is composed of six subunits: RnfA, RnfB, RnfC, RnfD, RnfE and RnfG. [4Fe-4S] cluster is required as a cofactor.

Its subcellular location is the cellular chromatophore membrane. In terms of biological role, part of a membrane-bound complex that couples electron transfer with translocation of ions across the membrane. Required for nitrogen fixation. Involved in electron transfer to nitrogenase. The polypeptide is Ion-translocating oxidoreductase complex subunit C (Rhodobacter capsulatus (Rhodopseudomonas capsulata)).